Consider the following 418-residue polypeptide: Secreted beta-glucosidase SUN41 (418 aa).

An N-terminal signal peptide occupies residues 1 to 23; it reads MRFSQATVLAFAALSLAAPAFEA. Over residues 81 to 97 the composition is skewed to low complexity; that stretch reads SEETSSTSTSISSTTTI. The disordered stretch occupies residues 81–150; sequence SEETSSTSTS…SGSTNGIEGD (70 aa). N-linked (GlcNAc...) asparagine glycosylation occurs at N100. Positions 112 to 126 are enriched in polar residues; it reads SLPSGTIKPSSFATE. The span at 127–136 shows a compositional bias: low complexity; the sequence is SQSQSQSSST.

This sequence belongs to the SUN family. Predicted to be a substrate for cleavage by KEX2.

Its subcellular location is the secreted. The protein resides in the cell wall. In terms of biological role, cell surface beta-glucosidase involved in cytokinesis, cell wall biogenesis, adhesion to host tissue, and biofilm formation; thus playing an important role in the host-pathogen interaction. Has hydrolytic activity on linear (1-&gt;3)-beta-D-glucans such as laminaribiose and other laminarioligosaccharides. In Candida albicans (strain SC5314 / ATCC MYA-2876) (Yeast), this protein is Secreted beta-glucosidase SUN41.